A 166-amino-acid chain; its full sequence is uncharacterized protein (166 aa).

4Fe-4S ferredoxin-type domains follow at residues 44-73, 75-104, and 139-166; these read ARED…LKQQ, ATLE…PNFP, and STLE…ITLK. Residues Cys53, Cys56, Cys59, Cys63, Cys84, Cys87, Cys90, and Cys94 each coordinate [4Fe-4S] cluster.

This is an uncharacterized protein from Haemophilus influenzae (strain ATCC 51907 / DSM 11121 / KW20 / Rd).